A 300-amino-acid chain; its full sequence is Type 1 fimbrin D-mannose specific adhesin (300 aa).

An N-terminal signal peptide occupies residues 1–21 (MKRVITLFAVLLMGWSVNAWS).

The protein belongs to the fimbrial protein family.

The protein localises to the fimbrium. Functionally, involved in regulation of length and mediation of adhesion of type 1 fimbriae (but not necessary for the production of fimbriae). Adhesin responsible for the binding to D-mannose. It is laterally positioned at intervals in the structure of the type 1 fimbriae. In order to integrate FimH in the fimbriae FimF and FimG are needed. This chain is Type 1 fimbrin D-mannose specific adhesin (fimH), found in Escherichia coli (strain K12).